Here is a 568-residue protein sequence, read N- to C-terminus: 2-succinyl-5-enolpyruvyl-6-hydroxy-3-cyclohexene-1-carboxylate synthase (568 aa).

This sequence belongs to the TPP enzyme family. MenD subfamily. As to quaternary structure, homodimer. Mg(2+) is required as a cofactor. The cofactor is Mn(2+). Requires thiamine diphosphate as cofactor.

The enzyme catalyses isochorismate + 2-oxoglutarate + H(+) = 5-enolpyruvoyl-6-hydroxy-2-succinyl-cyclohex-3-ene-1-carboxylate + CO2. Its pathway is quinol/quinone metabolism; 1,4-dihydroxy-2-naphthoate biosynthesis; 1,4-dihydroxy-2-naphthoate from chorismate: step 2/7. The protein operates within quinol/quinone metabolism; menaquinone biosynthesis. Catalyzes the thiamine diphosphate-dependent decarboxylation of 2-oxoglutarate and the subsequent addition of the resulting succinic semialdehyde-thiamine pyrophosphate anion to isochorismate to yield 2-succinyl-5-enolpyruvyl-6-hydroxy-3-cyclohexene-1-carboxylate (SEPHCHC). The protein is 2-succinyl-5-enolpyruvyl-6-hydroxy-3-cyclohexene-1-carboxylate synthase of Histophilus somni (strain 2336) (Haemophilus somnus).